The chain runs to 186 residues: Translation initiation factor IF-3 (186 aa).

Residues 1–20 (MINRSAGKDRDRSRSGDKEL) form a disordered region.

The protein belongs to the IF-3 family. Monomer.

It is found in the cytoplasm. IF-3 binds to the 30S ribosomal subunit and shifts the equilibrium between 70S ribosomes and their 50S and 30S subunits in favor of the free subunits, thus enhancing the availability of 30S subunits on which protein synthesis initiation begins. This Borrelia hermsii (strain HS1 / DAH) protein is Translation initiation factor IF-3.